We begin with the raw amino-acid sequence, 412 residues long: MTTQFSVEGIELELTRYPKNQESNLQAWDAADEHLIKHLKETEQVPVATAIINDNFGALTACLRSMESQWPLAVETDAKTSQLGTVQNLENNTLSSDNIQWLNSRENIPGAIELVLMKLPKNLSYFAHQLNRLSQVLPEGTQVLIGAKAKSINKSLLELFAKNLGPASASLTWKKTRVITCTADGKVRALPTESQWSIPDLNLNITNLSNVFASGKLDIGARIMLDNMPKGDFKSIIDLGCGNGVLGLNAKQLFPQAYIHFVDDSEMAVESARQNWALNKLDTLGLVGEQATFGWDDCLTHLNEGIRPELILCNPPFHQGEAITDHIAWQMFLQSWRALKNGGILHVVGNRHLAYHVKLQRIFKNCTTVASNGKFVILQAQKISKKAEPHENGESSSDTPNPQSSLYGGVKR.

The disordered stretch occupies residues 386–412; it reads KAEPHENGESSSDTPNPQSSLYGGVKR. Polar residues predominate over residues 394-406; that stretch reads ESSSDTPNPQSSL.

The protein belongs to the methyltransferase superfamily. RlmG family.

It localises to the cytoplasm. It catalyses the reaction guanosine(1835) in 23S rRNA + S-adenosyl-L-methionine = N(2)-methylguanosine(1835) in 23S rRNA + S-adenosyl-L-homocysteine + H(+). Specifically methylates the guanine in position 1835 (m2G1835) of 23S rRNA. This is Ribosomal RNA large subunit methyltransferase G from Shewanella sediminis (strain HAW-EB3).